We begin with the raw amino-acid sequence, 253 residues long: uncharacterized protein (253 aa).

This is an uncharacterized protein from Haemophilus influenzae (strain ATCC 51907 / DSM 11121 / KW20 / Rd).